Reading from the N-terminus, the 246-residue chain is MTNNAAAPLYSLRGLPLIGWRDMSHALNYLFADGQLKQGTLVAINAEKLLTAEDNPEVRALIAAAEFKYADGISVVRSIRKKFPQAQVSRVAGADLWEALMARAGKEGTPVFLVGGKPEVLAQTEAKLRTQWNVNIVGSQDGYFTPEQRQALFARIHASGAKIVTVAMGSPKQELLMRDCREVHPHALYMGVGGTYDVFTGHVKRAPKIWQNLGLEWLYRLLSQPRRITRQMRLLRYLRWHYTGDL.

The protein belongs to the glycosyltransferase 26 family.

It carries out the reaction UDP-N-acetyl-alpha-D-mannosaminouronate + N-acetyl-alpha-D-glucosaminyl-di-trans,octa-cis-undecaprenyl diphosphate = beta-D-ManNAcA-(1-&gt;4)-alpha-D-GlcNAc-di-trans,octa-cis-undecaprenyl diphosphate + UDP + H(+). The protein operates within bacterial outer membrane biogenesis; enterobacterial common antigen biosynthesis. In terms of biological role, catalyzes the synthesis of Und-PP-GlcNAc-ManNAcA (Lipid II), the second lipid-linked intermediate involved in enterobacterial common antigen (ECA) synthesis. This is UDP-N-acetyl-D-mannosaminuronic acid transferase from Salmonella dublin (strain CT_02021853).